The following is a 352-amino-acid chain: tRNA pseudouridine synthase D (352 aa).

Residue Asp-81 is the Nucleophile of the active site. Residues 157–303 (GIPNYFGVQR…MEHERRILRL (147 aa)) form the TRUD domain.

The protein belongs to the pseudouridine synthase TruD family.

The catalysed reaction is uridine(13) in tRNA = pseudouridine(13) in tRNA. Responsible for synthesis of pseudouridine from uracil-13 in transfer RNAs. The chain is tRNA pseudouridine synthase D from Pseudomonas syringae pv. tomato (strain ATCC BAA-871 / DC3000).